Consider the following 347-residue polypeptide: S-adenosylmethionine:tRNA ribosyltransferase-isomerase (347 aa).

It belongs to the QueA family. In terms of assembly, monomer.

Its subcellular location is the cytoplasm. The catalysed reaction is 7-aminomethyl-7-carbaguanosine(34) in tRNA + S-adenosyl-L-methionine = epoxyqueuosine(34) in tRNA + adenine + L-methionine + 2 H(+). The protein operates within tRNA modification; tRNA-queuosine biosynthesis. Its function is as follows. Transfers and isomerizes the ribose moiety from AdoMet to the 7-aminomethyl group of 7-deazaguanine (preQ1-tRNA) to give epoxyqueuosine (oQ-tRNA). This Bordetella bronchiseptica (strain ATCC BAA-588 / NCTC 13252 / RB50) (Alcaligenes bronchisepticus) protein is S-adenosylmethionine:tRNA ribosyltransferase-isomerase.